The following is a 275-amino-acid chain: MSRRKTATKIIDYLEKRINCENIMRYTDEYLDNNSPDKSLVIDEVPVSFTIIPYNANENYSRQLVSTEGDREDKPDFNDIKHMFDVFDFMTEANNTGFEHFPYIYGVLDCLNDIDSTVYVYYEKFDGTLPLLIDNIEHPSDWYDIVFQIVLIIMYIKYVGKMSFKAAPERFLYKKITKPYYKEYSVGDTTLNINHKYLIVCWDTNTTDFEGIQNSESSSENKLPIIDLDFLTEYINVNKDSLKIQPSNRIIKLIQEIKNQPDNIPKILVQYYGPQ.

It localises to the virion. This is an uncharacterized protein from Acanthamoeba polyphaga (Amoeba).